A 2542-amino-acid chain; its full sequence is Zinc finger FYVE domain-containing protein 26 (2542 aa).

Disordered regions lie at residues 591 to 658 and 740 to 811; these read HLPE…GPHT and VTSN…QVEA. Serine 612 and serine 616 each carry phosphoserine. A compositionally biased stretch (basic residues) spans 752–772; sequence RRYRPTAKRHSSLRRGRRTRR. The span at 785–803 shows a compositional bias: low complexity; that stretch reads SLEGTSSELSTSTSEGSLS. Position 798 is a phosphoserine (serine 798). A coiled-coil region spans residues 866-891; the sequence is MFVERYQEVIQELARVEHKIENQNSD. The disordered stretch occupies residues 1273 to 1292; it reads SPRPSENPSAERKSDSSPKD. Positions 1281 to 1290 are enriched in basic and acidic residues; it reads SAERKSDSSP. Residues 1495-1522 are a coiled coil; sequence VSDMAVPEELKSELQRKLTELRVYQKIL. Phosphoserine occurs at positions 1739, 1761, 1783, and 1785. The tract at residues 1746–1807 is disordered; the sequence is PVHQASDPET…LEFVPPETPP (62 aa). Positions 1757 to 1779 are enriched in low complexity; it reads SRSSSAEFSAAAAAPAPAAPGSA. The FYVE-type zinc-finger motif lies at 1815 to 1875; it reads DETESMCMVC…VCDQCYSYYN (61 aa). Zn(2+) contacts are provided by cysteine 1821, cysteine 1824, cysteine 1838, cysteine 1841, cysteine 1846, cysteine 1849, cysteine 1867, and cysteine 1870.

Belongs to the ZFYVE26 family. Interacts with AP5Z1, AP5B1, AP5S1 and SPG11. Interacts with TTC19 and KIF13A.

It is found in the cytoplasm. Its subcellular location is the cytoskeleton. It localises to the microtubule organizing center. The protein localises to the centrosome. The protein resides in the midbody. Phosphatidylinositol 3-phosphate-binding protein required for the abscission step in cytokinesis: recruited to the midbody during cytokinesis and acts as a regulator of abscission. May also be required for efficient homologous recombination DNA double-strand break repair. The sequence is that of Zinc finger FYVE domain-containing protein 26 (Zfyve26) from Rattus norvegicus (Rat).